The sequence spans 486 residues: UDP-N-acetylmuramate--L-alanine ligase (486 aa).

123–129 (GTHGKTT) provides a ligand contact to ATP.

The protein belongs to the MurCDEF family.

It is found in the cytoplasm. The catalysed reaction is UDP-N-acetyl-alpha-D-muramate + L-alanine + ATP = UDP-N-acetyl-alpha-D-muramoyl-L-alanine + ADP + phosphate + H(+). The protein operates within cell wall biogenesis; peptidoglycan biosynthesis. Its function is as follows. Cell wall formation. The protein is UDP-N-acetylmuramate--L-alanine ligase of Pseudomonas syringae pv. syringae (strain B728a).